The chain runs to 186 residues: Ribosome-recycling factor (186 aa).

This sequence belongs to the RRF family.

Its subcellular location is the cytoplasm. Its function is as follows. Responsible for the release of ribosomes from messenger RNA at the termination of protein biosynthesis. May increase the efficiency of translation by recycling ribosomes from one round of translation to another. The protein is Ribosome-recycling factor of Cupriavidus taiwanensis (strain DSM 17343 / BCRC 17206 / CCUG 44338 / CIP 107171 / LMG 19424 / R1) (Ralstonia taiwanensis (strain LMG 19424)).